Here is a 525-residue protein sequence, read N- to C-terminus: Allantoate deiminase (525 aa).

The N-terminal stretch at 1-53 is a signal peptide; it reads MAVPHPSSSSSRSHPFLSHVYHTSFHHHHHHNHPSLVLFWCLVFSLLSPLALS. Positions 56 to 75 are enriched in low complexity; that stretch reads SSSSSSSSDSSSSSSSHISL. A disordered region spans residues 56 to 78; the sequence is SSSSSSSSDSSSSSSSHISLGIG. Residue N156 is glycosylated (N-linked (GlcNAc...) asparagine). Mn(2+)-binding residues include H167, D178, E215, H281, and H499.

This sequence belongs to the peptidase M20A family. As to quaternary structure, homodimer. The cofactor is Mn(2+). Expressed in seedlings, roots, stems, leaves, flowers, siliques and seeds.

The protein localises to the endoplasmic reticulum. It catalyses the reaction allantoate + H2O + 2 H(+) = (S)-2-ureidoglycine + NH4(+) + CO2. Its activity is regulated as follows. Inhibited by borate, fluoride, L-Asn and L-Asp, but not by phenylphosphorodiamidate. Involved in the catabolism of purine nucleotides. Can use allantoate as substrate, but not Nalpha-carbamoyl-L-Asp, Nalpha-carbamoyl-L-Ala or Nalpha-carbamoyl-Gly. The sequential activity of AAH, UGLYAH and UAH allows a complete purine breakdown without the intermediate generation of urea. Involved in the regulation of seed maturation and seed dormancy. The chain is Allantoate deiminase from Arabidopsis thaliana (Mouse-ear cress).